Here is a 210-residue protein sequence, read N- to C-terminus: Calcium-activated potassium channel subunit beta-4 (210 aa).

The Cytoplasmic portion of the chain corresponds to 1 to 19; that stretch reads MAKLRVSYEYTEAEDKSIR. A helical transmembrane segment spans residues 20–40; the sequence is LGLFLIVSGILSLFIFGFCWL. Residues 41-167 are Extracellular-facing; it reads SPALQDLQAT…DVLLQRTHDE (127 aa). N-linked (GlcNAc...) asparagine glycosylation is found at asparagine 53 and asparagine 90. Residues 168–188 traverse the membrane as a helical segment; the sequence is IVLLHCFLWPVVAFVVGVLIV. Residues 189 to 210 are Cytoplasmic-facing; that stretch reads VLTICAKSLAVKAEAMKKRKFS.

This sequence belongs to the KCNMB (TC 8.A.14.1) family. KCNMB4 subfamily. As to quaternary structure, interacts with KCNMA1 tetramer. There are probably 4 molecules of KCMNB4 per KCNMA1 tetramer. Interacts with FMR1 (via N-terminus). In terms of processing, phosphorylated. Phosphorylation modulates its effect on KCNMA1 activation kinetics. Post-translationally, N-glycosylated. A highly glycosylated form is promoted by KCNMA1. Glycosylation, which is not required for the interaction with KCNMA1 and subcellular location, increases protection against charybdotoxin.

The protein resides in the membrane. Its function is as follows. Regulatory subunit of the calcium activated potassium KCNMA1 (maxiK) channel. Modulates the calcium sensitivity and gating kinetics of KCNMA1, thereby contributing to KCNMA1 channel diversity. Decreases the gating kinetics and calcium sensitivity of the KCNMA1 channel, but with fast deactivation kinetics. May decrease KCNMA1 channel openings at low calcium concentrations but increases channel openings at high calcium concentrations. Makes KCNMA1 channel resistant to 100 nM charybdotoxin (CTX) toxin concentrations. The chain is Calcium-activated potassium channel subunit beta-4 (Kcnmb4) from Rattus norvegicus (Rat).